A 22-amino-acid polypeptide reads, in one-letter code: Mu-conotoxin SxIIIC (22 aa).

3 disulfide bridges follow: Cys3–Cys15, Cys4–Cys21, and Cys10–Cys22. Cysteine amide is present on Cys22.

This sequence belongs to the conotoxin M superfamily. As to expression, expressed by the venom duct.

The protein localises to the secreted. Functionally, mu-conotoxins block voltage-gated sodium channels (Nav). This toxin potently inhibits hNav1.4/SCN4A (IC(50)=15.11 nM). It also displays lower activities on other human subtypes (Nav1.1/SCN1A; IC(50)=132 nM, Nav1.2/SCN2A; IC(50)=363.8, Nav1.3/SCN3A; IC(50)=89.4, Nav1.6/SCN3A; IC(50)=124.9, Nav1.7/SCN7A; IC(50)=152.2). At Nav1.7/SCN9A, it does not elicit change in channel voltage-dependence of fast inactivation or activation, suggesting it acts as a pore blocker. Interestingly, it blocks current inhibition in an irreversible manner (tested during 35 minutes). The polypeptide is Mu-conotoxin SxIIIC (Conus striolatus (Cone snail)).